The sequence spans 337 residues: Glyceraldehyde-3-phosphate dehydrogenase (337 aa).

Residues 12 to 13 (RI), D34, R78, and T121 contribute to the NAD(+) site. D-glyceraldehyde 3-phosphate-binding positions include 151–153 (SCT), T182, R199, 212–213 (SG), and R235. C152 functions as the Nucleophile in the catalytic mechanism. N317 is an NAD(+) binding site.

The protein belongs to the glyceraldehyde-3-phosphate dehydrogenase family. In terms of assembly, homotetramer.

The protein localises to the cytoplasm. The catalysed reaction is D-glyceraldehyde 3-phosphate + phosphate + NAD(+) = (2R)-3-phospho-glyceroyl phosphate + NADH + H(+). The protein operates within carbohydrate degradation; glycolysis; pyruvate from D-glyceraldehyde 3-phosphate: step 1/5. Functionally, catalyzes the oxidative phosphorylation of glyceraldehyde 3-phosphate (G3P) to 1,3-bisphosphoglycerate (BPG) using the cofactor NAD. The first reaction step involves the formation of a hemiacetal intermediate between G3P and a cysteine residue, and this hemiacetal intermediate is then oxidized to a thioester, with concomitant reduction of NAD to NADH. The reduced NADH is then exchanged with the second NAD, and the thioester is attacked by a nucleophilic inorganic phosphate to produce BPG. The sequence is that of Glyceraldehyde-3-phosphate dehydrogenase (gap) from Lactococcus lactis subsp. lactis (strain IL1403) (Streptococcus lactis).